The following is a 140-amino-acid chain: Lysozyme B (140 aa).

Residues 1 to 18 (MKAFIVLVALALAAPALG) form the signal peptide. The C-type lysozyme domain maps to 19 to 140 (RTMDRCSLAR…GWLPSIDDCF (122 aa)). Disulfide bonds link Cys-24/Cys-139, Cys-45/Cys-129, Cys-80/Cys-96, and Cys-92/Cys-110. Active-site residues include Glu-50 and Asp-68.

Belongs to the glycosyl hydrolase 22 family. In terms of tissue distribution, found in the midgut.

It carries out the reaction Hydrolysis of (1-&gt;4)-beta-linkages between N-acetylmuramic acid and N-acetyl-D-glucosamine residues in a peptidoglycan and between N-acetyl-D-glucosamine residues in chitodextrins.. Functionally, unlikely to play an active role in the humoral immune defense. May have a function in the digestion of bacteria in the food. This Drosophila melanogaster (Fruit fly) protein is Lysozyme B (LysB).